A 542-amino-acid chain; its full sequence is Protein MGF 505-11L (542 aa).

The protein belongs to the asfivirus MGF 505 family.

In terms of biological role, plays a role in virus cell tropism, and may be required for efficient virus replication in macrophages. This African swine fever virus (isolate Tick/Malawi/Lil 20-1/1983) (ASFV) protein is Protein MGF 505-11L.